The following is a 506-amino-acid chain: Cobyric acid synthase (506 aa).

Residues 260–453 (KVGVAAIYFP…FHGIFNEPAV (194 aa)) enclose the GATase cobBQ-type domain. Cys341 serves as the catalytic Nucleophile. His445 is a catalytic residue.

It belongs to the CobB/CobQ family. CobQ subfamily.

It participates in cofactor biosynthesis; adenosylcobalamin biosynthesis. Catalyzes amidations at positions B, D, E, and G on adenosylcobyrinic A,C-diamide. NH(2) groups are provided by glutamine, and one molecule of ATP is hydrogenolyzed for each amidation. The chain is Cobyric acid synthase from Chlorobium chlorochromatii (strain CaD3).